A 168-amino-acid polypeptide reads, in one-letter code: Alkyl hydroperoxide reductase C (168 aa).

Positions 1–138 (EFIEVSEESF…LVNKIKAAQY (138 aa)) constitute a Thioredoxin domain. Cys-28 acts as the Cysteine sulfenic acid (-SOH) intermediate in catalysis.

This sequence belongs to the peroxiredoxin family. AhpC/Prx1 subfamily. In terms of assembly, homodimer; disulfide-linked, upon oxidation. 5 homodimers assemble to form a ring-like decamer.

The protein resides in the cytoplasm. The catalysed reaction is a hydroperoxide + NADH + H(+) = an alcohol + NAD(+) + H2O. Its function is as follows. Thiol-specific peroxidase that catalyzes the reduction of hydrogen peroxide and organic hydroperoxides to water and alcohols, respectively. Plays a role in cell protection against oxidative stress by detoxifying peroxides. This chain is Alkyl hydroperoxide reductase C, found in Ferdinandcohnia aciditolerans (strain JCM 32973 / CCTCC AB 2017280 / YN-1) (Bacillus aciditolerans).